Here is a 60-residue protein sequence, read N- to C-terminus: Large ribosomal subunit protein uL30 (60 aa).

The protein belongs to the universal ribosomal protein uL30 family. In terms of assembly, part of the 50S ribosomal subunit.

The chain is Large ribosomal subunit protein uL30 from Saccharopolyspora erythraea (strain ATCC 11635 / DSM 40517 / JCM 4748 / NBRC 13426 / NCIMB 8594 / NRRL 2338).